The chain runs to 255 residues: L-erythrulose-1-phosphate isomerase (255 aa).

The active-site Electrophile is the His-98. Glu-171 serves as the catalytic Proton acceptor. Substrate contacts are provided by Gly-177 and Ser-214.

Belongs to the triosephosphate isomerase family. In terms of assembly, homodimer.

Its subcellular location is the cytoplasm. The catalysed reaction is L-erythrulose 1-phosphate = D-erythrulose 4-phosphate. Its pathway is carbohydrate metabolism; erythritol degradation. Functionally, catalyzes the isomerization of D-erythrulose-4P to L-erythrulose-1P. The polypeptide is L-erythrulose-1-phosphate isomerase (Rhizobium meliloti (strain 1021) (Ensifer meliloti)).